Here is a 568-residue protein sequence, read N- to C-terminus: MLKSQIAPIPSYESQPVHKPSSSVNFITFNQDGSCIAVGNNKGYSIFTTNPFTKCYDSPPGEAIGIVEMLYSTSLVVVVALGEETGSSPRKLKIINTKRGSTICDLVFPSTILKVKLTRSRMIVLLEEQIYLYDISTMKLLHTIETSPNMAGICAISADQGSTDTSNSADNSGSIGSGPASGSGAGSGSASMTSTDSTPDAQSHSYLAYPSPPKTAMHDSLLVAGINTNGGSHSKQNNIQSVSNAPNRVGDVIIFDTDSLQPLCVIEAHKSALAAISLSSDGRLLATASDKGTIVRVFSVSTGAKLYQFRRGTYPTKVYSVAFSPDNRYVVTTSASGTVHIFRLGEDESLESKHKRKRASRQHETIAEETSATQDLDDEIEDDGDDSDVDDVESLEVVPSKQRKLSQGSSNSYTSMNSGISGMSEDGKEPKIDPIVDHARLSVARMIRRSSQTLGRKAAQKMGDFLPSKFASILEPTRHFASLKIASASKDVKSIAVLDSQVVHDMVPQMFLHSKDAAPASALDTQSMTEMALLHIFVVTSDGYLYVYGLDPERGGDCILLQQHSFDI.

The WD 1 repeat unit spans residues 19-57; sequence KPSSSVNFITFNQDGSCIAVGNNKGYSIFTTNPFTKCYD. The segment covering 162-171 has biased composition (polar residues); sequence STDTSNSADN. Residues 162 to 210 form a disordered region; the sequence is STDTSNSADNSGSIGSGPASGSGAGSGSASMTSTDSTPDAQSHSYLAYP. Over residues 175 to 187 the composition is skewed to gly residues; the sequence is IGSGPASGSGAGS. Residues 188-198 show a composition bias toward low complexity; sequence GSASMTSTDST. 2 WD repeats span residues 268–308 and 313–352; these read AHKS…KLYQ and TYPT…SLES. Positions 309–313 match the L/FRRG motif motif; the sequence is FRRGT. The segment at 350–429 is disordered; the sequence is LESKHKRKRA…ISGMSEDGKE (80 aa). Residues 375 to 394 show a composition bias toward acidic residues; the sequence is DLDDEIEDDGDDSDVDDVES. Polar residues predominate over residues 405–421; sequence LSQGSSNSYTSMNSGIS. WD repeat units lie at residues 464–508 and 518–558; these read DFLP…DMVP and APAS…GGDC.

It belongs to the WD repeat PROPPIN family. As to quaternary structure, component of the PI(3,5)P2 regulatory complex.

It is found in the preautophagosomal structure membrane. The protein localises to the vacuole membrane. Its subcellular location is the endosome membrane. Its function is as follows. The PI(3,5)P2 regulatory complex regulates both the synthesis and turnover of phosphatidylinositol 3,5-bisphosphate (PtdIns(3,5)P2). Necessary for proper vacuole morphology. Plays an important role in osmotically-induced vacuole fragmentation. Required for cytoplasm to vacuole transport (Cvt) vesicle formation, pexophagy and starvation-induced autophagy. Involved in correct ATG9 trafficking to the pre-autophagosomal structure. Might also be involved in premeiotic DNA replication. This Meyerozyma guilliermondii (strain ATCC 6260 / CBS 566 / DSM 6381 / JCM 1539 / NBRC 10279 / NRRL Y-324) (Yeast) protein is Autophagy-related protein 18 (ATG18).